We begin with the raw amino-acid sequence, 122 residues long: Large ribosomal subunit protein bL12 (122 aa).

It belongs to the bacterial ribosomal protein bL12 family. As to quaternary structure, homodimer. Part of the ribosomal stalk of the 50S ribosomal subunit. Forms a multimeric L10(L12)X complex, where L10 forms an elongated spine to which 2 to 4 L12 dimers bind in a sequential fashion. Binds GTP-bound translation factors.

Its function is as follows. Forms part of the ribosomal stalk which helps the ribosome interact with GTP-bound translation factors. Is thus essential for accurate translation. This Borrelia hermsii (strain HS1 / DAH) protein is Large ribosomal subunit protein bL12.